The chain runs to 1431 residues: 1-phosphatidylinositol 4,5-bisphosphate phosphodiesterase beta egl-8 (1431 aa).

A PI-PLC X-box domain is found at 340–491; it reads MDMDQPLCHY…LRKKILIKNK (152 aa). Residue His355 is part of the active site. Residues Asn356, Glu385, and Asp387 each coordinate Ca(2+). The active site involves His403. Position 437 (Glu437) interacts with Ca(2+). Substrate contacts are provided by Lys489 and Lys491. Disordered stretches follow at residues 510–601 and 632–692; these read KLDE…MVPD and RRQS…SGPS. Residues 543–556 show a composition bias toward acidic residues; that stretch reads EEVDDDTSDDDDDP. Low complexity-rich tracts occupy residues 572 to 586, 652 to 661, and 668 to 692; these read NTTS…ARSS, SSSSPATPSI, and ATSS…SGPS. The region spanning 758-874 is the PI-PLC Y-box domain; sequence LSSLVNYTHP…GYLLKPDFLR (117 aa). Substrate contacts are provided by Ser787 and Arg814. One can recognise a C2 domain in the interval 877–1002; sequence DRTFDPFSES…SLRSDTNQSF (126 aa). Disordered stretches follow at residues 1072 to 1119, 1150 to 1176, and 1188 to 1216; these read QPPR…VAVD, DLRK…SSIA, and NNRR…SASG. The segment covering 1074 to 1113 has biased composition (polar residues); the sequence is PRQNGSSADLLANNGQTGSARGDQTSSMASSTIRSPNEQP. Residues 1135 to 1166 are a coiled coil; it reads KAFAKLLKRFQKELDDLRKKHQKQRDSIQKQQ. A compositionally biased stretch (basic and acidic residues) spans 1150–1162; the sequence is DLRKKHQKQRDSI. Basic residues predominate over residues 1191–1200; sequence RSTKKEKGSR. A compositionally biased stretch (low complexity) spans 1204-1216; sequence TASVSSGCGSASG. Coiled coils occupy residues 1288–1318 and 1368–1402; these read DEEE…KNQM and EKNL…QLEQ.

Ca(2+) serves as cofactor. As to expression, expressed in most or all neurons with high expression in the head and tail ganglia and low expression in the motor neurons of the ventral cord. Expressed in the intestine (at protein level). In males, expressed in vas deferens, spicule protractor muscles, diagonal muscles and a male-specific neuron.

The protein resides in the perikaryon. Its subcellular location is the cell projection. It is found in the axon. The protein localises to the synapse. It localises to the cell junction. The protein resides in the adherens junction. The enzyme catalyses a 1,2-diacyl-sn-glycero-3-phospho-(1D-myo-inositol-4,5-bisphosphate) + H2O = 1D-myo-inositol 1,4,5-trisphosphate + a 1,2-diacyl-sn-glycerol + H(+). In terms of biological role, mediates the production of the second messenger molecules diacylglycerol (DAG) and inositol 1,4,5-trisphosphate (IP3) which plays an important role in the regulation of intracellular signaling cascades. Required in the nervous system to modulate neuronal activity. Facilitates synaptic transmission at neuromuscular junctions by regulating the release of acetylcholine from the motor neurons and thus affecting locomotion. Plays a role in efficient egg laying and defecation. Involved in axon regeneration after injury. Plays a role in male mating behavior by regulating spicule insertion and sperm transfer. By triggering Ca(2+) transient via IP3-mediated activation of IPR3 receptor itr-1 in ASH sensory neurons, regulates avoidance behavior in response to nose touch. By activating tpa-1 via DAG production, required for the expression of antimicrobial peptide nlp-29 in response to fungal infection. During embryogenesis, may play a role in epidermal morphogenesis together with plc-1. This Caenorhabditis elegans protein is 1-phosphatidylinositol 4,5-bisphosphate phosphodiesterase beta egl-8.